A 346-amino-acid polypeptide reads, in one-letter code: 3',5'-cyclic-nucleotide phosphodiesterase (346 aa).

It belongs to the cyclic nucleotide phosphodiesterase class-II family.

It catalyses the reaction a nucleoside 3',5'-cyclic phosphate + H2O = a nucleoside 5'-phosphate + H(+). This Schizosaccharomyces pombe (strain 972 / ATCC 24843) (Fission yeast) protein is 3',5'-cyclic-nucleotide phosphodiesterase (cgs2).